Here is a 319-residue protein sequence, read N- to C-terminus: Acetyl-coenzyme A carboxylase carboxyl transferase subunit alpha (319 aa).

Residues 35–296 (NIDEEVHRLR…KAQLLEDLAD (262 aa)) enclose the CoA carboxyltransferase C-terminal domain.

The protein belongs to the AccA family. As to quaternary structure, acetyl-CoA carboxylase is a heterohexamer composed of biotin carboxyl carrier protein (AccB), biotin carboxylase (AccC) and two subunits each of ACCase subunit alpha (AccA) and ACCase subunit beta (AccD).

It localises to the cytoplasm. The catalysed reaction is N(6)-carboxybiotinyl-L-lysyl-[protein] + acetyl-CoA = N(6)-biotinyl-L-lysyl-[protein] + malonyl-CoA. It functions in the pathway lipid metabolism; malonyl-CoA biosynthesis; malonyl-CoA from acetyl-CoA: step 1/1. Its function is as follows. Component of the acetyl coenzyme A carboxylase (ACC) complex. First, biotin carboxylase catalyzes the carboxylation of biotin on its carrier protein (BCCP) and then the CO(2) group is transferred by the carboxyltransferase to acetyl-CoA to form malonyl-CoA. The sequence is that of Acetyl-coenzyme A carboxylase carboxyl transferase subunit alpha from Salmonella agona (strain SL483).